The following is a 551-amino-acid chain: Solute carrier family 22 member 3 (551 aa).

A helical transmembrane segment spans residues 21 to 41; that stretch reads VFLLLCLTGVTFAFLFVGVVF. Asn-72, Asn-99, and Asn-114 each carry an N-linked (GlcNAc...) asparagine glycan. A helical transmembrane segment spans residues 177-197; that stretch reads LIVYLISCFGVGITGVVVAFA. The N-linked (GlcNAc...) asparagine glycan is linked to Asn-199. 2 consecutive transmembrane segments (helical) span residues 236 to 256 and 264 to 284; these read IVGIVIQMFFTLGIIILPGIA and GIQLAISLPSFLFLLYYWVVP. The short motif at 284 to 288 is the Proline-rich sequence element; sequence PESPR. A glycan (N-linked (GlcNAc...) asparagine) is linked at Asn-317. The next 3 membrane-spanning stretches (helical) occupy residues 376-396, 463-483, and 493-513; these read MDFFISGLVELPGALLILLTI, FGVSLCSGLCDFGGIIAPFLL, and LPLIIFGILASVCGGLVMLLP.

It belongs to the major facilitator (TC 2.A.1) superfamily. Organic cation transporter (TC 2.A.1.19) family. In terms of tissue distribution, highly expressed in placenta. Expressed in intestine, hear, kidney and lung. Widely expressed in brain, particularly in hippocampus, cerebellum, cerebral cortex. In the brain, expressed predominantly in regions located at the brain-cerebrospinal fluid border, with expression extending to regions that belong to monoaminergic pathways such as raphe nuclei, striatum and thalamus. In brain, expressed in neurons and glial cells of amygdala. Expression is low in kidney and lung and undetectable in liver. Expressed in Sertoli cells in testis. Expressed in tracheal and bronchial epithelium of the respiratory tract, where it localizes to the apical membrane of ciliated and brush cells, and in basal cells.

The protein resides in the cell membrane. It localises to the apical cell membrane. The protein localises to the basolateral cell membrane. Its subcellular location is the mitochondrion membrane. It is found in the endomembrane system. The protein resides in the nucleus membrane. It localises to the nucleus outer membrane. It catalyses the reaction (R)-noradrenaline(out) = (R)-noradrenaline(in). The catalysed reaction is (R)-adrenaline(out) = (R)-adrenaline(in). It carries out the reaction serotonin(out) = serotonin(in). The enzyme catalyses dopamine(out) = dopamine(in). It catalyses the reaction histamine(out) = histamine(in). The catalysed reaction is tyramine(in) = tyramine(out). It carries out the reaction guanidine(out) = guanidine(in). The enzyme catalyses agmatine(out) = agmatine(in). It catalyses the reaction spermidine(in) = spermidine(out). The catalysed reaction is L-histidyl-L-proline diketopiperazine(in) = L-histidyl-L-proline diketopiperazine(out). It carries out the reaction (R)-salsolinol(in) = (R)-salsolinol(out). Electrogenic voltage-dependent transporter that mediates the transport of a variety of organic cations such as endogenous bioactive amines, cationic drugs and xenobiotics. Cation cellular uptake or release is driven by the electrochemical potential, i.e. membrane potential and concentration gradient. Functions as a Na(+)- and Cl(-)-independent, bidirectional uniporter. Implicated in neuronal monoamine neurotransmitters cellular uptake such as dopamine, adrenaline/epinephrine, noradrenaline/norepinephrine, histamine, serotonin and tyramine, thereby supporting a role in homeostatic regulation of aminergic neurotransmission in the brain. Transports dopaminergic neuromodulators cyclo(his-pro) and salsolinol with low efficiency. May be involved in the uptake and disposition of cationic compounds by renal clearance from the blood flow. May contribute to regulate the transport of cationic compounds in testis across the blood-testis-barrier. Mediates the transport of polyamine spermidine and putrescine. Mediates the bidirectional transport of polyamine agmatine. Also transports guanidine. May also mediate intracellular transport of organic cations, thereby playing a role in amine metabolism and intracellular signaling. In Rattus norvegicus (Rat), this protein is Solute carrier family 22 member 3.